We begin with the raw amino-acid sequence, 130 residues long: Large ribosomal subunit protein bL17 (130 aa).

The protein belongs to the bacterial ribosomal protein bL17 family. Part of the 50S ribosomal subunit. Contacts protein L32.

The protein is Large ribosomal subunit protein bL17 of Pectobacterium atrosepticum (strain SCRI 1043 / ATCC BAA-672) (Erwinia carotovora subsp. atroseptica).